The following is a 517-amino-acid chain: Protein NETWORKED 4B (517 aa).

2 disordered regions span residues 1–29 (MASS…DSHN) and 101–159 (LQKN…EDGD). Over residues 10–21 (KQFKRSMTKKSH) the composition is skewed to basic residues. One can recognise an NAB domain in the interval 21-101 (HSWWWDSHNC…ERYDQASGEL (81 aa)). Low complexity predominate over residues 107–119 (SEIQSQSSLEISS). Residues 121 to 135 (TKEKLSRRQSSHKEE) show a composition bias toward basic and acidic residues. Residues 156 to 486 (EDGDEALIRR…EQKREAIRQL (331 aa)) adopt a coiled-coil conformation.

This sequence belongs to the NET family.

Plant-specific actin binding protein. May be part of a membrane-cytoskeletal adapter complex. The polypeptide is Protein NETWORKED 4B (Arabidopsis thaliana (Mouse-ear cress)).